The following is a 159-amino-acid chain: Immunoglobulin J chain (159 aa).

Positions 1-21 are cleaved as a signal peptide; the sequence is MKTHLLLWGVLAIFVKAVLVT. Intrachain disulfides connect C34/C123, C93/C113, and C131/C156. N70 carries an N-linked (GlcNAc...) (complex) asparagine glycan.

In terms of assembly, part of the secretory IgA (sIgA) complex that consists of two, four or five IgA monomers, and two additional non-Ig polypeptides, namely the JCHAIN and the secretory component (the proteolytic product of PIGR). Part of the secretory IgM (sIgM) complex that consist of five IgM monomers, and two additional non-Ig polypeptides, namely the JCHAIN and the secretory component (the proteolytic product of PIGR). JCHAIN-containing IgM interacts (via CH4 domain) with FCRM (via Ig-like domain).

Its subcellular location is the secreted. Its function is as follows. Serves to link two monomer units of either IgM or IgA. In the case of IgM, the J chain-joined dimer is a nucleating unit for the IgM pentamer, and in the case of IgA it induces dimers and/or larger polymers. It also helps to bind these immunoglobulins to secretory component. This Mus musculus (Mouse) protein is Immunoglobulin J chain.